Here is a 40-residue protein sequence, read N- to C-terminus: Auxin-responsive endogenous peptide 1 (40 aa).

The helical transmembrane segment at 7 to 29 threads the bilayer; it reads LIYRLVVRCFLDYSICAPFYFYH.

In terms of tissue distribution, expressed in cotyledons, hypocotyls, roots, newly developing leaves and shoot apical meristem. Not detected in flowers, siliques or mature leaves.

The protein localises to the cytoplasm. It is found in the nucleus. Its subcellular location is the membrane. In terms of biological role, negative regulator of the auxin response. This is Auxin-responsive endogenous peptide 1 from Arabidopsis thaliana (Mouse-ear cress).